Here is a 186-residue protein sequence, read N- to C-terminus: NADH-quinone oxidoreductase subunit C (186 aa).

Positions 166–186 (DSLTPWKGVGRPSDPFDGRKE) are disordered.

The protein belongs to the complex I 30 kDa subunit family. As to quaternary structure, NDH-1 is composed of 14 different subunits. Subunits NuoB, C, D, E, F, and G constitute the peripheral sector of the complex.

It localises to the cell inner membrane. It catalyses the reaction a quinone + NADH + 5 H(+)(in) = a quinol + NAD(+) + 4 H(+)(out). In terms of biological role, NDH-1 shuttles electrons from NADH, via FMN and iron-sulfur (Fe-S) centers, to quinones in the respiratory chain. The immediate electron acceptor for the enzyme in this species is believed to be ubiquinone. Couples the redox reaction to proton translocation (for every two electrons transferred, four hydrogen ions are translocated across the cytoplasmic membrane), and thus conserves the redox energy in a proton gradient. This Neorickettsia sennetsu (strain ATCC VR-367 / Miyayama) (Ehrlichia sennetsu) protein is NADH-quinone oxidoreductase subunit C.